The following is a 270-amino-acid chain: Replication protein A 32 kDa subunit (270 aa).

Met1 carries the N-acetylmethionine modification. Phosphoserine; by PRKDC occurs at positions 4 and 8. Thr21 is subject to Phosphothreonine; by PRKDC. Residues 22–41 are disordered; that stretch reads QSPGGFGSPTPSQAEKKSRA. A Phosphoserine; by CDK2 modification is found at Ser23. Ser29 is subject to Phosphoserine; by CDK1. Ser33 carries the phosphoserine; by PRKDC modification. Residues Lys37 and Lys38 each participate in a glycyl lysine isopeptide (Lys-Gly) (interchain with G-Cter in ubiquitin) cross-link. The OB DNA-binding region spans 74–148; that stretch reads VTIVGIIRHA…KSLVAFKIIP (75 aa). Residues 187–270 are interaction with RAD52, TIPIN, UNG and XPA; sequence GMGEPGNFSG…DDHFKSTDAE (84 aa).

The protein belongs to the replication factor A protein 2 family. In terms of assembly, component of the replication protein A complex (RPA/RP-A), a heterotrimeric complex composed of RPA1, RPA2 and RPA3. Interacts with PRPF19; the PRP19-CDC5L complex is recruited to the sites of DNA repair where it ubiquitinates the replication protein A complex (RPA). Interacts with SERTAD3. Interacts with TIPIN. Interacts with TIMELESS. Interacts with PPP4R2; the interaction is direct, DNA damage-dependent and mediates the recruitment of the PP4 catalytic subunit PPP4C. Interacts (hyperphosphorylated) with RAD51. Interacts with SMARCAL1; the interaction is direct and mediates the recruitment to the RPA complex of SMARCAL1. Interacts with RAD52 and XPA; those interactions are direct and associate RAD52 and XPA to the RPA complex. Interacts with FBH1. Interacts with ETAA1; the interaction is direct and promotes ETAA1 recruitment at stalled replication forks. Interacts with DDI2. Interacts (in unphosphorylated form via N-terminus) with EIF4EBP3; the interaction enhances EIF4EBP3-mediated inhibition of EIF4E-mediated mRNA nuclear export. Interacts with nuclear UNG (isoform 2); this interaction mediates UNG recruitment to RPA-coated single-stranded DNA at stalled replication forks. Differentially phosphorylated throughout the cell cycle, becoming phosphorylated at the G1-S transition and dephosphorylated in late mitosis. Mainly phosphorylated at Ser-23 and Ser-29, by cyclin A-CDK2 and cyclin B-CDK1, respectively during DNA replication and mitosis. Dephosphorylation may require the serine/threonine-protein phosphatase 4. Phosphorylation at Ser-23 and Ser-29 is a prerequisite for further phosphorylation. Becomes hyperphosphorylated on additional residues including Ser-4, Ser-8, Thr-21 and Ser-33 in response to DNA damage. Hyperphosphorylation is mediated by ATM, ATR and PRKDC. Primarily recruited to DNA repair nuclear foci as a hypophosphorylated form it undergoes subsequent hyperphosphorylation, catalyzed by ATR. Hyperphosphorylation is required for RAD51 recruitment to chromatin and efficient DNA repair. Phosphorylation at Thr-21 depends upon RFWD3 presence. In terms of processing, DNA damage-induced 'Lys-63'-linked polyubiquitination by PRPF19 mediates ATRIP recruitment to the RPA complex at sites of DNA damage and activation of ATR. Ubiquitinated by RFWD3 at stalled replication forks in response to DNA damage: ubiquitination by RFWD3 does not lead to degradation by the proteasome and promotes removal of the RPA complex from stalled replication forks, promoting homologous recombination.

It is found in the nucleus. It localises to the PML body. In terms of biological role, as part of the heterotrimeric replication protein A complex (RPA/RP-A), binds and stabilizes single-stranded DNA intermediates, that form during DNA replication or upon DNA stress. It prevents their reannealing and in parallel, recruits and activates different proteins and complexes involved in DNA metabolism. Thereby, it plays an essential role both in DNA replication and the cellular response to DNA damage. In the cellular response to DNA damage, the RPA complex controls DNA repair and DNA damage checkpoint activation. Through recruitment of ATRIP activates the ATR kinase a master regulator of the DNA damage response. It is required for the recruitment of the DNA double-strand break repair factors RAD51 and RAD52 to chromatin in response to DNA damage. Also recruits to sites of DNA damage proteins like XPA and XPG that are involved in nucleotide excision repair and is required for this mechanism of DNA repair. Also plays a role in base excision repair (BER) probably through interaction with UNG. Also recruits SMARCAL1/HARP, which is involved in replication fork restart, to sites of DNA damage. May also play a role in telomere maintenance. This Rattus norvegicus (Rat) protein is Replication protein A 32 kDa subunit (Rpa2).